A 360-amino-acid polypeptide reads, in one-letter code: Probable dual-specificity RNA methyltransferase RlmN (360 aa).

Glu103 acts as the Proton acceptor in catalysis. The Radical SAM core domain occupies 109–342 (HEYGNSVCVT…VTIRREQGHD (234 aa)). A disulfide bridge links Cys116 with Cys347. Positions 123, 127, and 130 each coordinate [4Fe-4S] cluster. S-adenosyl-L-methionine is bound by residues 173 to 174 (GE), Ser205, 228 to 230 (SLH), and Asn304. The active-site S-methylcysteine intermediate is Cys347.

It belongs to the radical SAM superfamily. RlmN family. Requires [4Fe-4S] cluster as cofactor.

It is found in the cytoplasm. The catalysed reaction is adenosine(2503) in 23S rRNA + 2 reduced [2Fe-2S]-[ferredoxin] + 2 S-adenosyl-L-methionine = 2-methyladenosine(2503) in 23S rRNA + 5'-deoxyadenosine + L-methionine + 2 oxidized [2Fe-2S]-[ferredoxin] + S-adenosyl-L-homocysteine. It carries out the reaction adenosine(37) in tRNA + 2 reduced [2Fe-2S]-[ferredoxin] + 2 S-adenosyl-L-methionine = 2-methyladenosine(37) in tRNA + 5'-deoxyadenosine + L-methionine + 2 oxidized [2Fe-2S]-[ferredoxin] + S-adenosyl-L-homocysteine. Functionally, specifically methylates position 2 of adenine 2503 in 23S rRNA and position 2 of adenine 37 in tRNAs. The protein is Probable dual-specificity RNA methyltransferase RlmN of Bacillus pumilus (strain SAFR-032).